The sequence spans 231 residues: Large ribosomal subunit protein uL1 (231 aa).

It belongs to the universal ribosomal protein uL1 family. Part of the 50S ribosomal subunit.

Binds directly to 23S rRNA. The L1 stalk is quite mobile in the ribosome, and is involved in E site tRNA release. Its function is as follows. Protein L1 is also a translational repressor protein, it controls the translation of the L11 operon by binding to its mRNA. The protein is Large ribosomal subunit protein uL1 of Clostridium kluyveri (strain NBRC 12016).